We begin with the raw amino-acid sequence, 429 residues long: Histidinol dehydrogenase (429 aa).

Positions 130, 191, and 214 each coordinate NAD(+). Residues Ser-237, Gln-259, and His-262 each coordinate substrate. Residues Gln-259 and His-262 each coordinate Zn(2+). Catalysis depends on proton acceptor residues Glu-327 and His-328. Substrate-binding residues include His-328, Asp-361, Glu-415, and His-420. Position 361 (Asp-361) interacts with Zn(2+). Residue His-420 participates in Zn(2+) binding.

It belongs to the histidinol dehydrogenase family. Zn(2+) is required as a cofactor.

It carries out the reaction L-histidinol + 2 NAD(+) + H2O = L-histidine + 2 NADH + 3 H(+). It functions in the pathway amino-acid biosynthesis; L-histidine biosynthesis; L-histidine from 5-phospho-alpha-D-ribose 1-diphosphate: step 9/9. In terms of biological role, catalyzes the sequential NAD-dependent oxidations of L-histidinol to L-histidinaldehyde and then to L-histidine. This is Histidinol dehydrogenase from Nitrobacter winogradskyi (strain ATCC 25391 / DSM 10237 / CIP 104748 / NCIMB 11846 / Nb-255).